Consider the following 591-residue polypeptide: CTP synthase 1-B (591 aa).

A Glutamine amidotransferase type-1 domain is found at 300–554 (SIALVGKYTK…LASVGRLSQY (255 aa)). Catalysis depends on for GATase activity residues C399, H526, and E528. Residues 562-572 (SPRDTYSDRSE) are compositionally biased toward basic and acidic residues. The interval 562 to 581 (SPRDTYSDRSENSSPDAEIA) is disordered.

Belongs to the CTP synthase family.

The enzyme catalyses UTP + L-glutamine + ATP + H2O = CTP + L-glutamate + ADP + phosphate + 2 H(+). It participates in pyrimidine metabolism; CTP biosynthesis via de novo pathway; CTP from UDP: step 2/2. Its function is as follows. This enzyme is involved in the de novo synthesis of CTP, a precursor of DNA, RNA and phospholipids. Catalyzes the ATP-dependent amination of UTP to CTP with either L-glutamine or ammonia as a source of nitrogen. This Xenopus laevis (African clawed frog) protein is CTP synthase 1-B (ctps1-b).